The sequence spans 488 residues: Membrane-bound lytic murein transglycosylase F (488 aa).

Positions 1–25 (MFARPAIRMRCATGLLAIGTLLMLA) are cleaved as a signal peptide. A non-LT domain region spans residues 26–269 (GCGEEPKPSV…RLKERYYGHV (244 aa)). The LT domain stretch occupies residues 270–488 (DVLGYVGAYT…RTLDEQTPPL (219 aa)). Residue E316 is part of the active site.

It in the N-terminal section; belongs to the bacterial solute-binding protein 3 family. This sequence in the C-terminal section; belongs to the transglycosylase Slt family.

It localises to the cell outer membrane. The enzyme catalyses Exolytic cleavage of the (1-&gt;4)-beta-glycosidic linkage between N-acetylmuramic acid (MurNAc) and N-acetylglucosamine (GlcNAc) residues in peptidoglycan, from either the reducing or the non-reducing ends of the peptidoglycan chains, with concomitant formation of a 1,6-anhydrobond in the MurNAc residue.. Murein-degrading enzyme that degrades murein glycan strands and insoluble, high-molecular weight murein sacculi, with the concomitant formation of a 1,6-anhydromuramoyl product. Lytic transglycosylases (LTs) play an integral role in the metabolism of the peptidoglycan (PG) sacculus. Their lytic action creates space within the PG sacculus to allow for its expansion as well as for the insertion of various structures such as secretion systems and flagella. The protein is Membrane-bound lytic murein transglycosylase F of Ectopseudomonas mendocina (strain ymp) (Pseudomonas mendocina).